A 352-amino-acid polypeptide reads, in one-letter code: Protein-glutamate methylesterase/protein-glutamine glutaminase 1 (352 aa).

Residues 5-122 (KVLVVDDSAF…SLDVLSVKEE (118 aa)) enclose the Response regulatory domain. The residue at position 56 (Asp-56) is a 4-aspartylphosphate. One can recognise a CheB-type methylesterase domain in the interval 155–352 (PDQDRKLNKL…EITEEVLSML (198 aa)). Residues Ser-170, His-197, and Asp-297 contribute to the active site.

This sequence belongs to the CheB family. Phosphorylated by CheA. Phosphorylation of the N-terminal regulatory domain activates the methylesterase activity.

The protein resides in the cytoplasm. The enzyme catalyses [protein]-L-glutamate 5-O-methyl ester + H2O = L-glutamyl-[protein] + methanol + H(+). The catalysed reaction is L-glutaminyl-[protein] + H2O = L-glutamyl-[protein] + NH4(+). Involved in chemotaxis. Part of a chemotaxis signal transduction system that modulates chemotaxis in response to various stimuli. Catalyzes the demethylation of specific methylglutamate residues introduced into the chemoreceptors (methyl-accepting chemotaxis proteins or MCP) by CheR. Also mediates the irreversible deamidation of specific glutamine residues to glutamic acid. This is Protein-glutamate methylesterase/protein-glutamine glutaminase 1 from Syntrophomonas wolfei subsp. wolfei (strain DSM 2245B / Goettingen).